Consider the following 360-residue polypeptide: MVPRRLFVLAVVVLADTAAVVNSGFADSNPIRPVTDRAASALESTVFAALGRTRDALRFARFAVRYGKSYESAAEVHKRFRIFSESLQLVRSTNRKGLSYRLGINRFADMSWEEFRATRLGAAQNCSATLTGNHRMRAAAVALPETKDWREDGIVSPVKNQGHCGSCWTFSTTGALEAAYTQATGKPISLSEQQLVDCGFAFNNFGCNGGLPSQAFEYIKYNGGLDTEESYPYQGVNGICKFKNENVGVKVLDSVNITLGAEDELKDAVGLVRPVSVAFEVITGFRLYKSGVYTSDHCGTTPMDVNHAVLAVGYGVEDGVPYWLIKNSWGADWGDEGYFKMEMGKNMCGVATCASYPIVA.

Positions 1–19 (MVPRRLFVLAVVVLADTAA) are cleaved as a signal peptide. The propeptide at 20–142 (VVNSGFADSN…NHRMRAAAVA (123 aa)) is activation peptide. N-linked (GlcNAc...) asparagine glycosylation is present at Asn125. Intrachain disulfides connect Cys164-Cys207 and Cys198-Cys240. Cys167 is a catalytic residue. Asn256 is a glycosylation site (N-linked (GlcNAc...) asparagine). Cysteines 298 and 348 form a disulfide. Catalysis depends on residues His307 and Asn327.

This sequence belongs to the peptidase C1 family. As to expression, expressed at the onset of germination.

It is found in the vacuole. In terms of biological role, involved in the degradation of the storage protein zein. May play a role in proteolysis during emergencies. In Zea mays (Maize), this protein is Cysteine proteinase 2 (CCP2).